The sequence spans 666 residues: Transcriptional regulator MIT1 (666 aa).

Residues 90–104 (GSNANATSSGSTDSA) show a composition bias toward low complexity. 5 disordered regions span residues 90–157 (GSNA…SNRS), 232–254 (VKNNSTTTGNGPNNINNKSNSST), 314–389 (PPYI…FHNA), 425–479 (YTTQ…AENV), and 528–552 (AQENTTSNTNAEPSGATSTNSGTML). Composition is skewed to polar residues over residues 108–121 (DGTSGARNNPSSSK) and 139–157 (GHSSFESEQDTSISPSNRS). A Phosphoserine modification is found at Ser-152. Positions 233-254 (KNNSTTTGNGPNNINNKSNSST) are enriched in low complexity. Residues 314–333 (PPYITQSPDNTNATGMNTHV) are compositionally biased toward polar residues. Over residues 334 to 384 (NNNNNNSNNSSNSNNSNNNNNNNNNNNNNNNNNINNINNVNTNAGNGNNPN) the composition is skewed to low complexity. The segment covering 436–451 (ASTNENQGYSTSSTQH) has biased composition (polar residues). Residues 460–476 (SQSASAAAGATGTPGTA) are compositionally biased toward low complexity. Residues 530 to 552 (ENTTSNTNAEPSGATSTNSGTML) are compositionally biased toward polar residues.

Belongs to the MIT1/WOR1 family.

It localises to the cytoplasm. Its subcellular location is the nucleus. Transcriptional regulator of pseudohyphal growth. This chain is Transcriptional regulator MIT1 (MIT1), found in Saccharomyces cerevisiae (strain ATCC 204508 / S288c) (Baker's yeast).